We begin with the raw amino-acid sequence, 408 residues long: Tripartite motif containing 13 (408 aa).

The RING-type zinc-finger motif lies at 10–58; it reads CPICCSLFDDPRVLPCSHNFCKKCLDGVLEENSRTMQWRPSSFKCPTCR. Residues 89–131 form a B box-type zinc finger; it reads PKMPVCKEHSDQPLNIFCSTDLKLICGSCATTGEHKKHVFSSI. Positions 94, 97, 117, and 123 each coordinate Zn(2+). Residues 322 to 342 form a helical membrane-spanning segment; the sequence is ILVVACLILLLVTFLCAYPFI.

The protein localises to the endoplasmic reticulum membrane. It participates in protein modification; protein ubiquitination. In terms of biological role, E3 ubiquitin ligase involved in the retrotranslocation and turnover of membrane and secretory proteins from the ER through a set of processes named ER-associated degradation (ERAD). This process acts on misfolded proteins as well as in the regulated degradation of correctly folded proteins. The polypeptide is Tripartite motif containing 13 (trim13) (Xenopus tropicalis (Western clawed frog)).